The sequence spans 410 residues: G-protein coupled receptor family C group 5 member B (410 aa).

The first 28 residues, methionine 1–serine 28, serve as a signal peptide directing secretion. The Extracellular segment spans residues glutamate 29–glycine 56. Asparagine 30 is a glycosylation site (N-linked (GlcNAc...) asparagine). A helical transmembrane segment spans residues isoleucine 57 to leucine 77. The Cytoplasmic segment spans residues leucine 78–cysteine 94. Residues leucine 95 to isoleucine 115 form a helical membrane-spanning segment. At glutamine 116–arginine 126 the chain is on the extracellular side. A helical transmembrane segment spans residues phenylalanine 127 to valine 147. Topologically, residues arginine 148–serine 164 are cytoplasmic. The helical transmembrane segment at leucine 165–valine 185 threads the bilayer. Topologically, residues leucine 186–aspartate 199 are extracellular. A helical transmembrane segment spans residues phenylalanine 200–phenylalanine 220. At threonine 221–alanine 234 the chain is on the cytoplasmic side. Residues phenylalanine 235–leucine 255 form a helical membrane-spanning segment. The Extracellular portion of the chain corresponds to phenylalanine 256–threonine 271. Residues leucine 272–isoleucine 292 traverse the membrane as a helical segment. Residues histidine 293–tryptophan 410 are Cytoplasmic-facing. Serine 355 bears the Phosphoserine mark. Residues leucine 356–asparagine 381 are disordered. Residues serine 360–glycine 371 are compositionally biased toward low complexity.

The protein belongs to the G-protein coupled receptor 3 family.

The protein localises to the cell membrane. Its subcellular location is the cytoplasmic vesicle membrane. In terms of biological role, G-protein coupled receptor involved in the regulation of cell volume. The protein is G-protein coupled receptor family C group 5 member B (Gprc5b) of Mus musculus (Mouse).